Reading from the N-terminus, the 225-residue chain is Zinc finger protein 22 (225 aa).

A disordered region spans residues 1–35; the sequence is MRLGKPKGGISRSSSQGKVYENQRKTGRQRQRWGM. At lysine 18 the chain carries N6-acetyllysine. 5 consecutive C2H2-type zinc fingers follow at residues 55–77, 83–105, 111–133, 139–161, and 167–189; these read YKCVECEKSFSQSSTLFQHQKIH, HKCADCGKSFFQSSNLIQHRRVH, YRCDECGERFKQSSNLIQHQRIH, YQCDECGRCFSQSSHLIQHQRTH, and YQCSECGKCFSQSSHLRQHTKVH. The interval 183-225 is disordered; that stretch reads RQHTKVHEEEKPRKTRGRSLRAKTHSLSSWKAGKGRRSAAGLR. The segment covering 195–206 has biased composition (basic residues); it reads RKTRGRSLRAKT.

It belongs to the krueppel C2H2-type zinc-finger protein family.

The protein resides in the nucleus. Binds DNA through the consensus sequence 5'-CAATG-3'. May be involved in transcriptional regulation and may play a role in tooth formation. The chain is Zinc finger protein 22 (ZNF22) from Bos taurus (Bovine).